A 341-amino-acid chain; its full sequence is Protein DOWNY MILDEW RESISTANCE 6 (341 aa).

The Fe2OG dioxygenase domain maps to 188-288; that stretch reads QGQHMAVNYY…RLSVASFLCP (101 aa). Fe cation-binding residues include H212, D214, and H269. R279 contacts 2-oxoglutarate.

It belongs to the iron/ascorbate-dependent oxidoreductase family. Fe(2+) serves as cofactor.

It carries out the reaction salicylate + NADH + O2 + H(+) = 2,3-dihydroxybenzoate + NAD(+) + H2O. Functionally, converts salicylic acid (SA) to 2,3-dihydroxybenzoic acid (2,3-DHBA). Suppressor of immunity. Regulates negatively defense associated genes expression (e.g. PR-1, PR-2, and PR-5). Negative regulator of defense against Hyaloperonospora arabidopsidis. (Microbial infection) Required for susceptibility to the downy mildew pathogen Hyaloperonospora arabidopsidis. Its function is as follows. (Microbial infection) Required for susceptibility to Pseudomonas syringae pv. tomato DC3000. In terms of biological role, (Microbial infection) Required for susceptibility to the oomycete Phytophthora capsici. The protein is Protein DOWNY MILDEW RESISTANCE 6 of Arabidopsis thaliana (Mouse-ear cress).